Consider the following 238-residue polypeptide: 14-3-3 family protein artA (238 aa).

It belongs to the 14-3-3 family.

Functionally, 14-3-3 family protein that plays a role in the morphological differentiation and secondary metabolism biosynthesis. Required for normal fungal morphogenesis in an environment-dependent manner, affecting the balance between production of conidiophores and the formation of sclerotia, resistant structures that are necessary for the dissemination and survival. Acts as a positive regulator of conidiation and a negative regulator of sclerotial production. Also regulates the production of secondary metabolites such as aflatoxin, but also the indole-tetramic acid mycotoxin cyclopiazonic acid (CPA) and ustiloxin, an inhibitor of microtubule assembly. The sequence is that of 14-3-3 family protein artA from Aspergillus flavus (strain ATCC 200026 / FGSC A1120 / IAM 13836 / NRRL 3357 / JCM 12722 / SRRC 167).